The primary structure comprises 157 residues: Protein Smg (157 aa).

The protein belongs to the Smg family.

The sequence is that of Protein Smg from Buchnera aphidicola subsp. Acyrthosiphon pisum (strain 5A).